An 801-amino-acid chain; its full sequence is Cadherin-20 (801 aa).

Residues 1–34 form the signal peptide; it reads MWTTGRMSNAKSWLGLGTSLYFWALMDLTATVLS. A propeptide spanning residues 35–59 is cleaved from the precursor; the sequence is STPMPEVELETLFSGRSQSHQRSKR. The Extracellular segment spans residues 60 to 619; the sequence is SWVWNQFFVL…AYLLPVSLSR (560 aa). Cadherin domains follow at residues 61–165, 166–274, 275–389, 390–494, and 494–610; these read WVWN…EPKF, LDGP…PPRF, PQKH…PPVF, EPGF…APEF, and FPRF…SPEA. Asn261 is a glycosylation site (N-linked (GlcNAc...) asparagine). N-linked (GlcNAc...) asparagine glycans are attached at residues Asn420, Asn461, and Asn542. Residues 620–640 form a helical membrane-spanning segment; the sequence is GALIAILACIFVLLVLVLLIL. Topologically, residues 641-801 are cytoplasmic; sequence SMRRHRKQPY…GASEGPAPLW (161 aa).

Expressed in brain. Highest level of expression in the retina. In embryo it is synthesized by the forebrain, anterior neural ridge, developing visual system, primitive external granular layer of the cerebellum and a subset of neural crest cells likely to develop into melanoblasts.

It localises to the cell membrane. Functionally, cadherins are calcium-dependent cell adhesion proteins. They preferentially interact with themselves in a homophilic manner in connecting cells; cadherins may thus contribute to the sorting of heterogeneous cell types. The chain is Cadherin-20 (Cdh20) from Mus musculus (Mouse).